Consider the following 232-residue polypeptide: Probable ADP-ribosylation factor GTPase-activating protein AGD15 (232 aa).

The Arf-GAP domain maps to 16 to 130 (SKILEALLKH…RWVSPGAIQP (115 aa)). Residues 31–54 (CADCRSKAPRWASVNLGIFICMQC) form a C4-type zinc finger. The tract at residues 203–232 (PNQKNENFSSEVNQNRRTTIAPPSSWATFD) is disordered. A compositionally biased stretch (polar residues) spans 206 to 232 (KNENFSSEVNQNRRTTIAPPSSWATFD).

In terms of biological role, GTPase-activating protein (GAP) for ADP ribosylation factor (ARF). This chain is Probable ADP-ribosylation factor GTPase-activating protein AGD15 (AGD15), found in Arabidopsis thaliana (Mouse-ear cress).